We begin with the raw amino-acid sequence, 74 residues long: MLWLGFIALGVAIIIAAIIWVLLYKEYKKIKLQEKIEQIRQKIRDRTEDRGKESDGDAEWLAILLSPDKLDNWV.

Over 1–4 (MLWL) the chain is Extracellular. A helical membrane pass occupies residues 5 to 25 (GFIALGVAIIIAAIIWVLLYK). Residues 26 to 74 (EYKKIKLQEKIEQIRQKIRDRTEDRGKESDGDAEWLAILLSPDKLDNWV) are Cytoplasmic-facing. Serine 54 is subject to Phosphoserine; by host CK2.

It belongs to the HIV-1 VPU protein family. As to quaternary structure, homopentamer. Interacts with host CD4 and BRTC; these interactions induce proteasomal degradation of CD4. Interacts with host BST2; this interaction leads to the degradation of host BST2. Interacts with host FBXW11. Interacts with host AP1M1; this interaction plays a role in the mistrafficking and subsequent degradation of host BST2. Interacts with host RANBP2; this interaction allows Vpu to down-regulate host BLM sumoylation. Phosphorylated by host CK2. This phosphorylation is necessary for interaction with human BTRC and degradation of CD4.

The protein resides in the host membrane. Ion channel activity is inhibited by hexamethylene amiloride in vitro. Enhances virion budding by targeting host CD4 and Tetherin/BST2 to proteasome degradation. Degradation of CD4 prevents any unwanted premature interactions between viral Env and its host receptor CD4 in the endoplasmic reticulum. Degradation of antiretroviral protein Tetherin/BST2 is important for virion budding, as BST2 tethers new viral particles to the host cell membrane. Mechanistically, Vpu bridges either CD4 or BST2 to BTRC, a substrate recognition subunit of the Skp1/Cullin/F-box protein E3 ubiquitin ligase, induces their ubiquitination and subsequent proteasomal degradation. The alteration of the E3 ligase specificity by Vpu seems to promote the degradation of host IKBKB, leading to NF-kappa-B down-regulation and subsequent apoptosis. Acts as a viroporin that forms an oligomeric ion channel in membranes. Modulates the host DNA repair mechanisms to promote degradation of nuclear viral cDNA in cells that are already productively infected in order to suppress immune sensing and proviral hyper-integration (superinfection). Manipulates PML-NBs and modulates SUMOylation of host BLM protein thereby enhancing its DNA-end processing activity toward viral unintegrated linear DNA. Also inhibits RAD52-mediated homologous repair of viral cDNA, preventing the generation of dead-end circular forms of single copies of the long terminal repeat and permitting sustained nucleolytic attack. This chain is Protein Vpu, found in Human immunodeficiency virus type 1 group N (isolate YBF106) (HIV-1).